A 314-amino-acid chain; its full sequence is Probable cell division protein WhiA (314 aa).

The segment at residues 274–308 (SLKELGEMISTGPISKSGVNHRLRKLNELADKIRS) is a DNA-binding region (H-T-H motif).

The protein belongs to the WhiA family.

Functionally, involved in cell division and chromosome segregation. This chain is Probable cell division protein WhiA, found in Staphylococcus haemolyticus (strain JCSC1435).